Reading from the N-terminus, the 258-residue chain is Type III pantothenate kinase (258 aa).

Residue 6–13 (DIGNTNTV) coordinates ATP. Residues Tyr100 and 107-110 (GADR) contribute to the substrate site. Residue Asp109 is the Proton acceptor of the active site. Asp129 serves as a coordination point for K(+). Thr132 is a binding site for ATP. Residue Thr185 coordinates substrate.

The protein belongs to the type III pantothenate kinase family. Homodimer. Requires NH4(+) as cofactor. The cofactor is K(+).

It is found in the cytoplasm. It catalyses the reaction (R)-pantothenate + ATP = (R)-4'-phosphopantothenate + ADP + H(+). The protein operates within cofactor biosynthesis; coenzyme A biosynthesis; CoA from (R)-pantothenate: step 1/5. Functionally, catalyzes the phosphorylation of pantothenate (Pan), the first step in CoA biosynthesis. This chain is Type III pantothenate kinase, found in Syntrophobacter fumaroxidans (strain DSM 10017 / MPOB).